The chain runs to 798 residues: Bromodomain-containing protein 2 (798 aa).

Residue methionine 1 is modified to N-acetylmethionine. The tract at residues 1 to 21 (MLQNVTPHKLPGEGNAGLLGL) is disordered. Residue threonine 6 is modified to Phosphothreonine. At serine 36 the chain carries Phosphoserine. Positions 53-72 (LQLAPANPPPPEVSNPKKPG) are disordered. The Bromo 1 domain occupies 73 to 179 (RVTNQLQYLH…KIFLQKVASM (107 aa)). The a protein site is built by aspartate 111, tyrosine 154, asparagine 155, lysine 156, aspartate 159, and aspartate 160. Disordered stretches follow at residues 267-348 (PPAQ…LSEQ), 454-645 (DEPL…YDEK), and 736-798 (KRLQ…SDSG). Residues 284–297 (TTTPTPTAILAPGS) show a composition bias toward low complexity. Serine 297, serine 300, and serine 304 each carry phosphoserine. Over residues 315–331 (MRRESGRPIKPPRKDLP) the composition is skewed to basic and acidic residues. Residues 343–452 (GKLSEQLKHC…DVFEFRYAKM (110 aa)) enclose the Bromo 2 domain. The segment covering 480–512 (SSEESSSESSSEEEEEEEEDEDEEESESSDSEE) has biased composition (acidic residues). Residues 542-564 (KPKRKREKKEKKKKRKAEKHRGR) are compositionally biased toward basic residues. Residues 553–557 (KKKRK) carry the Nuclear localization signal motif. An NET domain is found at 630 to 712 (DSEEEEESRP…SCLRKKPRKP (83 aa)). Serine 631 is modified (phosphoserine). Low complexity predominate over residues 772 to 792 (SASSSSSDSSSSSSSSSSSDT).

It belongs to the BET family. As to quaternary structure, homodimer. Interacts with E2F1. Interacts with (acetylated) STAT3; promoting STAT3 recruitment to chromatin. Interacts with CTCF; promoting BRD2 recruitment to chromatin. In terms of tissue distribution, predominantly expressed in the testis, followed by ovary, placenta, embryo and to a lower extent in somatic tissues.

The protein resides in the nucleus. The protein localises to the chromosome. In terms of biological role, chromatin reader protein that specifically recognizes and binds histone H4 acetylated at 'Lys-5' and 'Lys-12' (H4K5ac and H4K12ac, respectively), thereby controlling gene expression and remodeling chromatin structures. Recruits transcription factors and coactivators to target gene sites, and activates RNA polymerase II machinery for transcriptional elongation. Plays a key role in genome compartmentalization via its association with CTCF and cohesin: recruited to chromatin by CTCF and promotes formation of topologically associating domains (TADs) via its ability to bind acetylated histones, contributing to CTCF boundary formation and enhancer insulation. Also recognizes and binds acetylated non-histone proteins, such as STAT3. Involved in inflammatory response by regulating differentiation of naive CD4(+) T-cells into T-helper Th17: recognizes and binds STAT3 acetylated at 'Lys-87', promoting STAT3 recruitment to chromatin. In addition to acetylated lysines, also recognizes and binds lysine residues on histones that are both methylated and acetylated on the same side chain to form N6-acetyl-N6-methyllysine (Kacme), an epigenetic mark of active chromatin associated with increased transcriptional initiation. Specifically binds histone H4 acetyl-methylated at 'Lys-5' and 'Lys-12' (H4K5acme and H4K12acme, respectively). The protein is Bromodomain-containing protein 2 of Mus musculus (Mouse).